The chain runs to 462 residues: Putative zinc metalloprotease RSc1411 (462 aa).

A helical membrane pass occupies residues 1 to 21 (MLTVLAFVFAIAVLIVVHELG). Residue His18 coordinates Zn(2+). Glu19 is an active-site residue. Zn(2+) is bound at residue His22. The helical transmembrane segment at 102–124 (FAIVAAGPVFNFLLAIALYALLA) threads the bilayer. The 83-residue stretch at 201–283 (TVRLRELPSA…MPEQNASIDI (83 aa)) folds into the PDZ domain. A run of 2 helical transmembrane segments spans residues 386 to 406 (FVAF…LPVP) and 430 to 450 (WQAV…SLAL).

The protein belongs to the peptidase M50B family. It depends on Zn(2+) as a cofactor.

It localises to the cell inner membrane. This Ralstonia nicotianae (strain ATCC BAA-1114 / GMI1000) (Ralstonia solanacearum) protein is Putative zinc metalloprotease RSc1411.